Here is a 422-residue protein sequence, read N- to C-terminus: Zinc finger protein zfp-2 (422 aa).

Positions 95 to 119 (AIPCTSSSMQPSTSSNPSSGEHQPV) are disordered. A compositionally biased stretch (low complexity) spans 99–113 (TSSSMQPSTSSNPSS). 7 C2H2-type zinc fingers span residues 171–194 (YRCT…QEVH), 200–222 (FRCF…LKDH), 229–251 (FSCD…HKMH), 255–278 (STCQ…STAH), 300–322 (YSCS…ERIH), 328–350 (YSCG…IRTH), and 356–379 (YGCG…LAAH).

Expressed in vulval cells and all somatic gonad structures such as spermatheca, sheath cells, uterine cells and distal tip cells.

Its subcellular location is the nucleus. Functionally, probable zinc finger transcription factor that acts as a transcriptional repressor. Acts redundantly with the transcriptional repressor lin-35 to control the development of somatic gonad lineages. May, in addition, suppress sensitivity to RNAi. This Caenorhabditis elegans protein is Zinc finger protein zfp-2.